The following is a 353-amino-acid chain: Probable D-xylulose reductase A (353 aa).

Positions 42, 67, and 68 each coordinate Zn(2+). 177–182 (GAGPVG) provides a ligand contact to NAD(+).

The protein belongs to the zinc-containing alcohol dehydrogenase family. Requires Zn(2+) as cofactor.

It catalyses the reaction xylitol + NAD(+) = D-xylulose + NADH + H(+). It functions in the pathway carbohydrate degradation; L-arabinose degradation via L-arabinitol; D-xylulose 5-phosphate from L-arabinose (fungal route): step 4/5. Functionally, xylitol dehydrogenase which catalyzes the conversion of xylitol to D-xylulose. Xylose is a major component of hemicelluloses such as xylan. Most fungi utilize D-xylose via three enzymatic reactions, xylose reductase (XR), xylitol dehydrogenase (XDH), and xylulokinase, to form xylulose 5-phosphate, which enters pentose phosphate pathway. This is Probable D-xylulose reductase A (xdhA) from Aspergillus terreus (strain NIH 2624 / FGSC A1156).